Reading from the N-terminus, the 201-residue chain is Probable nicotinate-nucleotide adenylyltransferase (201 aa).

The protein belongs to the NadD family.

It catalyses the reaction nicotinate beta-D-ribonucleotide + ATP + H(+) = deamido-NAD(+) + diphosphate. Its pathway is cofactor biosynthesis; NAD(+) biosynthesis; deamido-NAD(+) from nicotinate D-ribonucleotide: step 1/1. Catalyzes the reversible adenylation of nicotinate mononucleotide (NaMN) to nicotinic acid adenine dinucleotide (NaAD). The polypeptide is Probable nicotinate-nucleotide adenylyltransferase (Clostridium botulinum (strain Okra / Type B1)).